The chain runs to 271 residues: Adenosylcobinamide-GDP ribazoletransferase (271 aa).

The next 7 membrane-spanning stretches (helical) occupy residues 4 to 24 (FLLALRTTFGFLSTIPVGMSM), 35 to 55 (YLQTFAGIVLGSMIGIFAYLT), 58 to 78 (FLPSTISAVLIMVFIYYITGL), 108 to 128 (SLGIGGVSYTVLALIALYASI), 135 to 155 (VLFFSDNAALIIAISLLIAEI), 192 to 212 (FVLGALVCVLAFGTLGIIGYI), and 246 to 266 (IIVLMVLTVAITAVNNGYGGL).

It belongs to the CobS family. It depends on Mg(2+) as a cofactor.

The protein resides in the cell membrane. The enzyme catalyses alpha-ribazole + adenosylcob(III)inamide-GDP = adenosylcob(III)alamin + GMP + H(+). It catalyses the reaction alpha-ribazole 5'-phosphate + adenosylcob(III)inamide-GDP = adenosylcob(III)alamin 5'-phosphate + GMP + H(+). Its pathway is cofactor biosynthesis; adenosylcobalamin biosynthesis; adenosylcobalamin from cob(II)yrinate a,c-diamide: step 7/7. Its function is as follows. Joins adenosylcobinamide-GDP and alpha-ribazole to generate adenosylcobalamin (Ado-cobalamin). Also synthesizes adenosylcobalamin 5'-phosphate from adenosylcobinamide-GDP and alpha-ribazole 5'-phosphate. The polypeptide is Adenosylcobinamide-GDP ribazoletransferase (Methanococcoides burtonii (strain DSM 6242 / NBRC 107633 / OCM 468 / ACE-M)).